A 693-amino-acid polypeptide reads, in one-letter code: Elongation factor G (693 aa).

One can recognise a tr-type G domain in the interval 8–282 (KNTRNIGIMA…AVIDYLPSPL (275 aa)). GTP-binding positions include 17–24 (AHIDAGKT), 81–85 (DTPGH), and 135–138 (NKMD).

It belongs to the TRAFAC class translation factor GTPase superfamily. Classic translation factor GTPase family. EF-G/EF-2 subfamily.

Its subcellular location is the cytoplasm. In terms of biological role, catalyzes the GTP-dependent ribosomal translocation step during translation elongation. During this step, the ribosome changes from the pre-translocational (PRE) to the post-translocational (POST) state as the newly formed A-site-bound peptidyl-tRNA and P-site-bound deacylated tRNA move to the P and E sites, respectively. Catalyzes the coordinated movement of the two tRNA molecules, the mRNA and conformational changes in the ribosome. This chain is Elongation factor G, found in Staphylococcus epidermidis (strain ATCC 35984 / DSM 28319 / BCRC 17069 / CCUG 31568 / BM 3577 / RP62A).